Here is a 192-residue protein sequence, read N- to C-terminus: Imidazole glycerol phosphate synthase subunit HisH (192 aa).

The 192-residue stretch at Met1 to Asp192 folds into the Glutamine amidotransferase type-1 domain. Cys77 acts as the Nucleophile in catalysis. Active-site residues include His169 and Glu171.

Heterodimer of HisH and HisF.

It localises to the cytoplasm. It carries out the reaction 5-[(5-phospho-1-deoxy-D-ribulos-1-ylimino)methylamino]-1-(5-phospho-beta-D-ribosyl)imidazole-4-carboxamide + L-glutamine = D-erythro-1-(imidazol-4-yl)glycerol 3-phosphate + 5-amino-1-(5-phospho-beta-D-ribosyl)imidazole-4-carboxamide + L-glutamate + H(+). The catalysed reaction is L-glutamine + H2O = L-glutamate + NH4(+). Its pathway is amino-acid biosynthesis; L-histidine biosynthesis; L-histidine from 5-phospho-alpha-D-ribose 1-diphosphate: step 5/9. In terms of biological role, IGPS catalyzes the conversion of PRFAR and glutamine to IGP, AICAR and glutamate. The HisH subunit catalyzes the hydrolysis of glutamine to glutamate and ammonia as part of the synthesis of IGP and AICAR. The resulting ammonia molecule is channeled to the active site of HisF. In Staphylococcus epidermidis (strain ATCC 35984 / DSM 28319 / BCRC 17069 / CCUG 31568 / BM 3577 / RP62A), this protein is Imidazole glycerol phosphate synthase subunit HisH.